A 93-amino-acid chain; its full sequence is UPF0250 protein PA3998 (93 aa).

It belongs to the UPF0250 family.

The polypeptide is UPF0250 protein PA3998 (Pseudomonas aeruginosa (strain ATCC 15692 / DSM 22644 / CIP 104116 / JCM 14847 / LMG 12228 / 1C / PRS 101 / PAO1)).